The primary structure comprises 562 residues: Chaperonin GroEL 1 (562 aa).

Residues 30–33 (TLGP), K51, 87–91 (DGTTT), G415, 478–480 (NAA), and D494 each bind ATP.

It belongs to the chaperonin (HSP60) family. In terms of assembly, forms a cylinder of 14 subunits composed of two heptameric rings stacked back-to-back. Interacts with the co-chaperonin GroES.

It is found in the cytoplasm. The catalysed reaction is ATP + H2O + a folded polypeptide = ADP + phosphate + an unfolded polypeptide.. Together with its co-chaperonin GroES, plays an essential role in assisting protein folding. The GroEL-GroES system forms a nano-cage that allows encapsulation of the non-native substrate proteins and provides a physical environment optimized to promote and accelerate protein folding. This is Chaperonin GroEL 1 from Sorangium cellulosum (strain So ce56) (Polyangium cellulosum (strain So ce56)).